A 478-amino-acid polypeptide reads, in one-letter code: Aspartate ammonia-lyase (478 aa).

Positions 109, 148, 149, 150, and 195 each coordinate L-aspartate. Residues 326–335 (GSSIMPGKVN) are SS loop. The active-site Proton acceptor is the Ser-327. Residues Ser-328 and Lys-333 each contribute to the L-aspartate site.

It belongs to the class-II fumarase/aspartase family. Aspartase subfamily. As to quaternary structure, homotetramer.

The enzyme catalyses L-aspartate = fumarate + NH4(+). Its function is as follows. Catalyzes the reversible conversion of L-aspartate to fumarate and ammonia. The polypeptide is Aspartate ammonia-lyase (Pseudomonas fluorescens).